Consider the following 128-residue polypeptide: Conopressin-conophysin (128 aa).

The signal sequence occupies residues 1 to 27; sequence MTRSAMQMGRLTLVLCLLLLLLLTTQA. A disulfide bond links Cys-28 and Cys-33. A Glycine amide modification is found at Gly-36. The propeptide occupies 37 to 44; that stretch reads GKRDVDER. 7 cysteine pairs are disulfide-bonded: Cys-50–Cys-90, Cys-53–Cys-64, Cys-58–Cys-80, Cys-65–Cys-70, Cys-97–Cys-115, Cys-109–Cys-127, and Cys-116–Cys-121.

This sequence belongs to the vasopressin/oxytocin family. In terms of tissue distribution, expressed by the venom gland.

Its subcellular location is the secreted. Functionally, targets vasopressin-oxytocin related receptors. Is more active on fish receptors than on their human counterparts, supporting an evolved role of this conopressin in the envenomation process. Acts as an agonist on zebrafish vasopressin receptors V1a1R (EC(50)=10.6 nM), V1a2R (EC(50)=44.06 nM, partial agonist), V2R (EC(50)=299.2 nM) and oxytocin receptor (EC(50)=353.73 nM, partial agonist). Shows a weaker activity on human receptors AVPR1B (EC(50)=51.92 nM), AVPR1A (EC(50)=123.78 nM), AVPR2 (EC(50)=299.2 nM) and oxytocin (OXTR) receptor (EC(50)=455.66 nM, partial agonist). In vivo, exhibits grooming and scratching behavior in mice, following intracerebral injection. The chain is Conopressin-conophysin from Conus geographus (Geography cone).